We begin with the raw amino-acid sequence, 346 residues long: Methylthioribose-1-phosphate isomerase (346 aa).

Residues 46–48 (RGA), Arg-89, and Gln-196 each bind substrate. Asp-237 functions as the Proton donor in the catalytic mechanism. 247–248 (NK) is a binding site for substrate.

Belongs to the eIF-2B alpha/beta/delta subunits family. MtnA subfamily.

It catalyses the reaction 5-(methylsulfanyl)-alpha-D-ribose 1-phosphate = 5-(methylsulfanyl)-D-ribulose 1-phosphate. Its pathway is amino-acid biosynthesis; L-methionine biosynthesis via salvage pathway; L-methionine from S-methyl-5-thio-alpha-D-ribose 1-phosphate: step 1/6. Catalyzes the interconversion of methylthioribose-1-phosphate (MTR-1-P) into methylthioribulose-1-phosphate (MTRu-1-P). The sequence is that of Methylthioribose-1-phosphate isomerase from Geobacter sp. (strain M21).